Reading from the N-terminus, the 124-residue chain is Small ribosomal subunit protein uS12 (124 aa).

Residue Asp89 is modified to 3-methylthioaspartic acid.

It belongs to the universal ribosomal protein uS12 family. Part of the 30S ribosomal subunit. Contacts proteins S8 and S17. May interact with IF1 in the 30S initiation complex.

Functionally, with S4 and S5 plays an important role in translational accuracy. Interacts with and stabilizes bases of the 16S rRNA that are involved in tRNA selection in the A site and with the mRNA backbone. Located at the interface of the 30S and 50S subunits, it traverses the body of the 30S subunit contacting proteins on the other side and probably holding the rRNA structure together. The combined cluster of proteins S8, S12 and S17 appears to hold together the shoulder and platform of the 30S subunit. This Mannheimia haemolytica (Pasteurella haemolytica) protein is Small ribosomal subunit protein uS12 (rpsL).